A 202-amino-acid chain; its full sequence is MSTITFVTGNANKLKEVIAILASSETDSSSSSSSLSSSNKVGKFTITNQSVDLDEVQGTIEQVTIHKAQAAAKVIDGPVLVEDTCLGFNAFNDLPGPYIKWFVQSIGLTGLVKMLIGFEDKSAKAICTFGYCEGPDKEVKIFQGITEGKIVDSRGPTNFGWDSIFQPNGFEQTYAEMDKKVKNSISHRYKALDKVRDYLLSQ.

Residue 8–13 (TGNANK) coordinates ITP. Glutamate 55 is a Mg(2+) binding site. ITP-binding positions include lysine 67, 83-84 (DT), lysine 100, 159-162 (FGWD), lysine 182, and 187-188 (HR).

Belongs to the HAM1 NTPase family. Homodimer. Mg(2+) is required as a cofactor. It depends on Mn(2+) as a cofactor.

Its subcellular location is the cytoplasm. The protein localises to the nucleus. It catalyses the reaction ITP + H2O = IMP + diphosphate + H(+). The enzyme catalyses dITP + H2O = dIMP + diphosphate + H(+). The catalysed reaction is XTP + H2O = XMP + diphosphate + H(+). In terms of biological role, pyrophosphatase that hydrolyzes non-canonical purine nucleotides such as inosine triphosphate (ITP), deoxyinosine triphosphate (dITP) or xanthosine 5'-triphosphate (XTP) to their respective monophosphate derivatives. The enzyme does not distinguish between the deoxy- and ribose forms. Probably excludes non-canonical purines from RNA and DNA precursor pools, thus preventing their incorporation into RNA and DNA and avoiding chromosomal lesions. In Candida albicans (strain SC5314 / ATCC MYA-2876) (Yeast), this protein is Inosine triphosphate pyrophosphatase.